The following is a 48-amino-acid chain: Photosystem II reaction center protein K (48 aa).

Positions M1–G11 are excised as a propeptide. Residues L23–A43 traverse the membrane as a helical segment.

It belongs to the PsbK family. PSII is composed of 1 copy each of membrane proteins PsbA, PsbB, PsbC, PsbD, PsbE, PsbF, PsbH, PsbI, PsbJ, PsbK, PsbL, PsbM, PsbT, PsbX, PsbY, PsbZ, Psb30/Ycf12, at least 3 peripheral proteins of the oxygen-evolving complex and a large number of cofactors. It forms dimeric complexes.

It is found in the plastid. The protein resides in the chloroplast thylakoid membrane. One of the components of the core complex of photosystem II (PSII). PSII is a light-driven water:plastoquinone oxidoreductase that uses light energy to abstract electrons from H(2)O, generating O(2) and a proton gradient subsequently used for ATP formation. It consists of a core antenna complex that captures photons, and an electron transfer chain that converts photonic excitation into a charge separation. The protein is Photosystem II reaction center protein K of Lepocinclis buetschlii.